The primary structure comprises 40 residues: Photosystem II reaction center protein J (40 aa).

The chain crosses the membrane as a helical span at residues 8–28; that stretch reads IPLWLVATVAGLAAIGVLGIF.

The protein belongs to the PsbJ family. As to quaternary structure, PSII is composed of 1 copy each of membrane proteins PsbA, PsbB, PsbC, PsbD, PsbE, PsbF, PsbH, PsbI, PsbJ, PsbK, PsbL, PsbM, PsbT, PsbX, PsbY, PsbZ, Psb30/Ycf12, at least 3 peripheral proteins of the oxygen-evolving complex and a large number of cofactors. It forms dimeric complexes.

It is found in the plastid. Its subcellular location is the cyanelle thylakoid membrane. In terms of biological role, one of the components of the core complex of photosystem II (PSII). PSII is a light-driven water:plastoquinone oxidoreductase that uses light energy to abstract electrons from H(2)O, generating O(2) and a proton gradient subsequently used for ATP formation. It consists of a core antenna complex that captures photons, and an electron transfer chain that converts photonic excitation into a charge separation. This chain is Photosystem II reaction center protein J, found in Cyanophora paradoxa.